The following is a 101-amino-acid chain: UPF0235 protein SG2030 (101 aa).

This sequence belongs to the UPF0235 family.

The sequence is that of UPF0235 protein SG2030 from Sodalis glossinidius (strain morsitans).